Reading from the N-terminus, the 466-residue chain is F-box/LRR-repeat protein fbxl-1 (466 aa).

The region spanning 54–100 (SLINRVLPKEVLLKVFSFLDTKALCRSAQVCRSWSILALDGSNWQRV) is the F-box domain. LRR repeat units lie at residues 122–147 (GGFL…FTSR), 148–173 (CPNL…LGRY), 174–199 (CHKL…IGDG), 200–225 (CPNL…ILSN), 226–251 (CKSL…VEAH), 252–277 (MGAI…IANG), 278–303 (ATAL…LGQH), 304–329 (SHNL…LARG), 330–355 (CRQL…LANN), 356–381 (CTAL…LASK), and 408–433 (CKAL…FQHH).

As to quaternary structure, component of the SCF (SKP1-CUL1-F-box protein)-type E3 ubiquitin ligase complex. In terms of tissue distribution, expressed in neuroglial cells such as the socket cell and sheath cell, neurosecretory motor neurons and regions around the pharynx and anus.

The protein resides in the perikaryon. It is found in the cell projection. The protein localises to the dendrite. Its subcellular location is the cilium. It localises to the axon. Its function is as follows. Substrate-recognition component of the SCF (SKP1-CUL1-F-box protein)-type E3 ubiquitin ligase complex. Plays a role in regulating the entry into the dauer state. In hermaphrodites, may play a role in modulating the rate of defecation. This is F-box/LRR-repeat protein fbxl-1 from Caenorhabditis elegans.